We begin with the raw amino-acid sequence, 922 residues long: MKFGYKFSNLLGTVYNKGNILFTPDGNTVISPVGNRLTVFDLVNHTSITLPIQSKYNIRRLALSPNGQILITSDESGHTLIINLTRQVVLGEYKFFKTPKSILFSPNGAIIAIAVLEKVFLFKTPIIQKQPNPLIRLSVFTHKSAVISMCWSADSLKLMIGCKNGTLLIRQGKSERVSYFQVKGSGIINCFFGNEESTIAYAVTPTGLASWDYKTNEEMEQEKLERVENGETAYLREEEMDEEKLKVITENQRLYKGRWIFKGFKKFENYGVKCKVKTVCFHLKSKLLLVGFSTGQFILYEMPGFNQLYKLNISSHGISTSAINNTGEWLAFGCSELGQLLVWEWRSETYILKQQGHSYNMNTVAYSPDGQTIATGGEDGKVKIWNTTSGYCYITFTEHEGPVTAVKYSPVSSQNVVFSAGVDGTIRAFDLVRYRNFRTFVSPNKTQFSCLAVDPSGEIIAAGSLDSFEIYVWSVRTGRLTDILSGHQSPVCELAFDPINPFLASASWDKSCKIWNIFEDREIRESIQHTSDVLTCAYSQDGKKFIVSCLDGTIQIYETSTWGQIGLIDGKNDIMGGRGYKDEILAKNNSAGRAFTKIAFTPNGECIIAGGNSKYICIYHIDQQVLIKKYSTSSNLSLDGITLDINWKRVGEFGHLDAMEKDFDSDDDLYQQNKEYLTGSSKGDLSKRTTKKKQKTTSISVSPTGRAWAVSTTEGLLIYSLDDFLFFDPTDLSIDINPDSILSELNLKNYLKSLIMSIKLNEKPIIEKVFESIPFNEIQLVCQEFPIYYLKNFIQFLSGYFEKNHHLEFQMKWVKLISIYHGKYIKTNSLSMITSLRNLQKTITQTYNDISKVCDDNIFSMEYFKTVLLKELKSQEETNKISKKSQKYKKYLESKKNKEQEEDQFSDDEETVYQNNKKNKNK.

WD repeat units follow at residues 12–52 (GTVY…TLPI), 53–92 (QSKY…VLGE), 94–132 (KFFK…KQPN), 141–180 (THKS…VSYF), 182–221 (VKGS…EMEQ), 271–310 (GVKC…QLYK), 313–353 (ISSH…YILK), 356–395 (GHSY…CYIT), 398–439 (EHEG…NFRT), 443–485 (PNKT…DILS), 486–525 (GHQS…EIRE), 528–567 (QHTS…QIGL), 590–629 (SAGR…LIKK), and 691–731 (KKKQ…DPTD). The interval 893–922 (ESKKNKEQEEDQFSDDEETVYQNNKKNKNK) is disordered. The segment covering 900–911 (QEEDQFSDDEET) has biased composition (acidic residues).

It belongs to the WD repeat PWP2 family. Part of the small subunit (SSU) processome, composed of more than 70 proteins and the RNA chaperone small nucleolar RNA (snoRNA) U3.

The protein resides in the nucleus. It localises to the nucleolus. In terms of biological role, part of the small subunit (SSU) processome, first precursor of the small eukaryotic ribosomal subunit. During the assembly of the SSU processome in the nucleolus, many ribosome biogenesis factors, an RNA chaperone and ribosomal proteins associate with the nascent pre-rRNA and work in concert to generate RNA folding, modifications, rearrangements and cleavage as well as targeted degradation of pre-ribosomal RNA by the RNA exosome. The chain is Periodic tryptophan protein 2 homolog (pwp2) from Dictyostelium discoideum (Social amoeba).